We begin with the raw amino-acid sequence, 269 residues long: Formamidopyrimidine-DNA glycosylase (269 aa).

Residue proline 2 is the Schiff-base intermediate with DNA of the active site. Glutamate 3 acts as the Proton donor in catalysis. Catalysis depends on lysine 57, which acts as the Proton donor; for beta-elimination activity. Positions 90, 109, and 150 each coordinate DNA. Residues 235–269 (QVYGRHGEPCYTCGEFIQIAKYGQRSSFFCPSCQN) form an FPG-type zinc finger. Arginine 259 functions as the Proton donor; for delta-elimination activity in the catalytic mechanism.

The protein belongs to the FPG family. As to quaternary structure, monomer. The cofactor is Zn(2+).

The catalysed reaction is Hydrolysis of DNA containing ring-opened 7-methylguanine residues, releasing 2,6-diamino-4-hydroxy-5-(N-methyl)formamidopyrimidine.. The enzyme catalyses 2'-deoxyribonucleotide-(2'-deoxyribose 5'-phosphate)-2'-deoxyribonucleotide-DNA = a 3'-end 2'-deoxyribonucleotide-(2,3-dehydro-2,3-deoxyribose 5'-phosphate)-DNA + a 5'-end 5'-phospho-2'-deoxyribonucleoside-DNA + H(+). Involved in base excision repair of DNA damaged by oxidation or by mutagenic agents. Acts as a DNA glycosylase that recognizes and removes damaged bases. Has a preference for oxidized purines, such as 7,8-dihydro-8-oxoguanine (8-oxoG). Has AP (apurinic/apyrimidinic) lyase activity and introduces nicks in the DNA strand. Cleaves the DNA backbone by beta-delta elimination to generate a single-strand break at the site of the removed base with both 3'- and 5'-phosphates. This is Formamidopyrimidine-DNA glycosylase from Baumannia cicadellinicola subsp. Homalodisca coagulata.